We begin with the raw amino-acid sequence, 1138 residues long: BMP-2-inducible protein kinase (1138 aa).

Residue S13 is modified to Phosphoserine. Residues 48–313 (VTLEESLAEG…DIFQVSYFAF (266 aa)) enclose the Protein kinase domain. ATP contacts are provided by residues 54–62 (LAEGGFSTV) and K76. Catalysis depends on D177, which acts as the Proton acceptor. Disordered regions lie at residues 355 to 435 (TDTI…RVLQ), 638 to 831 (NRLG…PADA), and 906 to 1018 (PRSV…EFLT). Positions 358–390 (IGPTETSIAPRQRPKANSTAATSSVLTIQSSAT) are enriched in polar residues. Residues 417–435 (VLMVQGPPQQPPQQHRVLQ) show a composition bias toward low complexity. S676 is modified (phosphoserine). Residues 684-701 (HSPNQKSITANLTKNGGS) are compositionally biased toward polar residues. The segment covering 706 to 715 (KDQRAGKKTS) has biased composition (basic and acidic residues). S733, S806, and S807 each carry phosphoserine. Over residues 787-813 (DKHSSDSECEQAKTKRGDTSSLRRDKP) the composition is skewed to basic and acidic residues. A Phosphothreonine modification is found at T819. Phosphoserine is present on S908. A compositionally biased stretch (polar residues) spans 915-926 (TPFQPFSVSASK). The segment covering 951 to 965 (VKQRSLQKLSSRQRR) has biased composition (basic residues). 7 positions are modified to phosphoserine: S1010, S1012, S1013, S1020, S1022, S1087, and S1091. The disordered stretch occupies residues 1117 to 1138 (TPQQSQPVELDPFGAAPFPSKQ).

The protein belongs to the protein kinase superfamily. Ser/Thr protein kinase family. In terms of processing, autophosphorylated. In terms of tissue distribution, expressed in osteocytes and osteoblasts.

The protein localises to the nucleus. The enzyme catalyses L-seryl-[protein] + ATP = O-phospho-L-seryl-[protein] + ADP + H(+). It catalyses the reaction L-threonyl-[protein] + ATP = O-phospho-L-threonyl-[protein] + ADP + H(+). In terms of biological role, may be involved in osteoblast differentiation. In Mus musculus (Mouse), this protein is BMP-2-inducible protein kinase (Bmp2k).